We begin with the raw amino-acid sequence, 185 residues long: Ribosome-recycling factor (185 aa).

Belongs to the RRF family.

Its subcellular location is the cytoplasm. In terms of biological role, responsible for the release of ribosomes from messenger RNA at the termination of protein biosynthesis. May increase the efficiency of translation by recycling ribosomes from one round of translation to another. The polypeptide is Ribosome-recycling factor (Frankia alni (strain DSM 45986 / CECT 9034 / ACN14a)).